A 301-amino-acid polypeptide reads, in one-letter code: Diaminopimelate epimerase (301 aa).

Substrate-binding residues include Asn15, Gln47, and Asn67. The active-site Proton donor is the Cys76. Substrate is bound by residues 77 to 78 (GN), Asn163, Asn197, and 215 to 216 (ER). Cys224 acts as the Proton acceptor in catalysis. 225 to 226 (GS) is a binding site for substrate.

Belongs to the diaminopimelate epimerase family. In terms of assembly, homodimer.

It localises to the cytoplasm. The catalysed reaction is (2S,6S)-2,6-diaminopimelate = meso-2,6-diaminopimelate. It functions in the pathway amino-acid biosynthesis; L-lysine biosynthesis via DAP pathway; DL-2,6-diaminopimelate from LL-2,6-diaminopimelate: step 1/1. Catalyzes the stereoinversion of LL-2,6-diaminopimelate (L,L-DAP) to meso-diaminopimelate (meso-DAP), a precursor of L-lysine and an essential component of the bacterial peptidoglycan. This chain is Diaminopimelate epimerase, found in Rhizobium rhizogenes (strain K84 / ATCC BAA-868) (Agrobacterium radiobacter).